Here is a 537-residue protein sequence, read N- to C-terminus: Inositol phosphorylceramide glucuronosyltransferase 1 (537 aa).

Residues Thr6–Ser26 form a helical membrane-spanning segment. Positions 124 and 126 each coordinate Mn(2+). Residues Asp124 to Asp126, Asn153 to Gly155, Thr180 to Gln184, and His248 to Lys255 each bind substrate. Mn(2+) is bound at residue His248. 5 helical membrane passes run Asp293 to Tyr313, Val375 to Val395, Val406 to Phe426, Met468 to Phe488, and Met494 to Val514.

This sequence belongs to the glycosyltransferase 8 family. Glycogenin subfamily. Mn(2+) serves as cofactor. In terms of tissue distribution, expressed in seedlings, roots, leaves, stems and siliques.

It localises to the golgi apparatus membrane. The enzyme catalyses glucuronate acceptor + UDP-alpha-D-glucuronate = acceptor beta-D-glucuronoside + UDP + H(+). It catalyses the reaction a 1D-myo-inositol-1-phospho-N-[(R)-2-hydroxy-very-long-chain fatty acyl]-(R)-4-hydroxysphingoid base + UDP-alpha-D-glucuronate = an alpha-D-glucuronosyl-(1&lt;-&gt;6)-1D-myo-inositol-1-phospho-N-[(R)-2-hydroxy-very-long-chain fatty acyl]-(R)-4-hydroxysphingoid base + UDP + H(+). The protein operates within sphingolipid metabolism. Functionally, mediates the transfer of glucuronic acid (GlcA) from UDP-GlcA to glycosyl inositol phosphorylceramides (GIPCs). The formation of GIPCs sphingolipids is essential for pollen function, plant growth and defense. Required for global fitness. This Arabidopsis thaliana (Mouse-ear cress) protein is Inositol phosphorylceramide glucuronosyltransferase 1.